A 152-amino-acid polypeptide reads, in one-letter code: uncharacterized protein (152 aa).

The first 16 residues, 1 to 16 (MRKLLISLALAIPVFA), serve as a signal peptide directing secretion. The region spanning 20-135 (NLLQKGYEVY…AVAYWLYHNY (116 aa)) is the Cytochrome c domain. Positions 33, 36, and 37 each coordinate heme c.

This is an uncharacterized protein from Aquifex aeolicus (strain VF5).